Reading from the N-terminus, the 255-residue chain is tRNA (guanine-N(1)-)-methyltransferase (255 aa).

Residues Gly-117 and 137–142 (LGDFVL) contribute to the S-adenosyl-L-methionine site.

It belongs to the RNA methyltransferase TrmD family. As to quaternary structure, homodimer.

The protein resides in the cytoplasm. The enzyme catalyses guanosine(37) in tRNA + S-adenosyl-L-methionine = N(1)-methylguanosine(37) in tRNA + S-adenosyl-L-homocysteine + H(+). Its function is as follows. Specifically methylates guanosine-37 in various tRNAs. This chain is tRNA (guanine-N(1)-)-methyltransferase, found in Paraburkholderia xenovorans (strain LB400).